We begin with the raw amino-acid sequence, 404 residues long: Probable tRNA sulfurtransferase (404 aa).

The THUMP domain occupies 60–165 (EPVAEALKNV…DEAAYISHEE (106 aa)). Residues 183–184 (ML), 208–209 (HF), R265, G287, and Q296 each bind ATP.

This sequence belongs to the ThiI family.

Its subcellular location is the cytoplasm. The catalysed reaction is [ThiI sulfur-carrier protein]-S-sulfanyl-L-cysteine + a uridine in tRNA + 2 reduced [2Fe-2S]-[ferredoxin] + ATP + H(+) = [ThiI sulfur-carrier protein]-L-cysteine + a 4-thiouridine in tRNA + 2 oxidized [2Fe-2S]-[ferredoxin] + AMP + diphosphate. It carries out the reaction [ThiS sulfur-carrier protein]-C-terminal Gly-Gly-AMP + S-sulfanyl-L-cysteinyl-[cysteine desulfurase] + AH2 = [ThiS sulfur-carrier protein]-C-terminal-Gly-aminoethanethioate + L-cysteinyl-[cysteine desulfurase] + A + AMP + 2 H(+). Its pathway is cofactor biosynthesis; thiamine diphosphate biosynthesis. In terms of biological role, catalyzes the ATP-dependent transfer of a sulfur to tRNA to produce 4-thiouridine in position 8 of tRNAs, which functions as a near-UV photosensor. Also catalyzes the transfer of sulfur to the sulfur carrier protein ThiS, forming ThiS-thiocarboxylate. This is a step in the synthesis of thiazole, in the thiamine biosynthesis pathway. The sulfur is donated as persulfide by IscS. The sequence is that of Probable tRNA sulfurtransferase from Streptococcus uberis (strain ATCC BAA-854 / 0140J).